The following is a 122-amino-acid chain: Aspartate 1-decarboxylase (122 aa).

The active-site Schiff-base intermediate with substrate; via pyruvic acid is the Ser-25. Ser-25 is modified (pyruvic acid (Ser)). Thr-57 provides a ligand contact to substrate. Catalysis depends on Tyr-58, which acts as the Proton donor. Residue 73-75 (GAA) coordinates substrate.

The protein belongs to the PanD family. In terms of assembly, heterooctamer of four alpha and four beta subunits. It depends on pyruvate as a cofactor. Post-translationally, is synthesized initially as an inactive proenzyme, which is activated by self-cleavage at a specific serine bond to produce a beta-subunit with a hydroxyl group at its C-terminus and an alpha-subunit with a pyruvoyl group at its N-terminus.

The protein localises to the cytoplasm. It carries out the reaction L-aspartate + H(+) = beta-alanine + CO2. It functions in the pathway cofactor biosynthesis; (R)-pantothenate biosynthesis; beta-alanine from L-aspartate: step 1/1. Its function is as follows. Catalyzes the pyruvoyl-dependent decarboxylation of aspartate to produce beta-alanine. The sequence is that of Aspartate 1-decarboxylase from Bordetella parapertussis (strain 12822 / ATCC BAA-587 / NCTC 13253).